We begin with the raw amino-acid sequence, 188 residues long: Threonylcarbamoyl-AMP synthase (188 aa).

The YrdC-like domain occupies 3–188 (QLQPSAVATT…RSGQILRNGS (186 aa)).

This sequence belongs to the SUA5 family. TsaC subfamily.

Its subcellular location is the cytoplasm. The enzyme catalyses L-threonine + hydrogencarbonate + ATP = L-threonylcarbamoyladenylate + diphosphate + H2O. Functionally, required for the formation of a threonylcarbamoyl group on adenosine at position 37 (t(6)A37) in tRNAs that read codons beginning with adenine. Catalyzes the conversion of L-threonine, HCO(3)(-)/CO(2) and ATP to give threonylcarbamoyl-AMP (TC-AMP) as the acyladenylate intermediate, with the release of diphosphate. The sequence is that of Threonylcarbamoyl-AMP synthase from Shewanella frigidimarina (strain NCIMB 400).